The sequence spans 103 residues: Large ribosomal subunit protein bL21 (103 aa).

Belongs to the bacterial ribosomal protein bL21 family. In terms of assembly, part of the 50S ribosomal subunit. Contacts protein L20.

In terms of biological role, this protein binds to 23S rRNA in the presence of protein L20. The chain is Large ribosomal subunit protein bL21 from Methylibium petroleiphilum (strain ATCC BAA-1232 / LMG 22953 / PM1).